The sequence spans 203 residues: MLTVALPKGRIADETLNIFSKIFNDEFKFEDRKLTMIKDNFEFLMVRNQDIPTYVTEGAADIGVVGLDVLEEHNCDVLRLLNLKLGKCKVCIGIKNSDTLDYTKPELKIATKMPNITKNYFASKAVAAKIIKLYGSIELAPIVGLSDAIVDIVETGTTMKQNGLKVADIIMESSAHLIANKNSFITKRDEILSLYHKINSVIN.

It belongs to the ATP phosphoribosyltransferase family. Short subfamily. As to quaternary structure, heteromultimer composed of HisG and HisZ subunits.

Its subcellular location is the cytoplasm. It carries out the reaction 1-(5-phospho-beta-D-ribosyl)-ATP + diphosphate = 5-phospho-alpha-D-ribose 1-diphosphate + ATP. The protein operates within amino-acid biosynthesis; L-histidine biosynthesis; L-histidine from 5-phospho-alpha-D-ribose 1-diphosphate: step 1/9. In terms of biological role, catalyzes the condensation of ATP and 5-phosphoribose 1-diphosphate to form N'-(5'-phosphoribosyl)-ATP (PR-ATP). Has a crucial role in the pathway because the rate of histidine biosynthesis seems to be controlled primarily by regulation of HisG enzymatic activity. The polypeptide is ATP phosphoribosyltransferase (Campylobacter fetus subsp. fetus (strain 82-40)).